Here is a 348-residue protein sequence, read N- to C-terminus: Methylthioribose-1-phosphate isomerase (348 aa).

Residues 46–48 (RGA), arginine 88, and glutamine 194 each bind substrate. The Proton donor role is filled by aspartate 235. 245 to 246 (NK) serves as a coordination point for substrate.

It belongs to the eIF-2B alpha/beta/delta subunits family. MtnA subfamily.

The enzyme catalyses 5-(methylsulfanyl)-alpha-D-ribose 1-phosphate = 5-(methylsulfanyl)-D-ribulose 1-phosphate. It functions in the pathway amino-acid biosynthesis; L-methionine biosynthesis via salvage pathway; L-methionine from S-methyl-5-thio-alpha-D-ribose 1-phosphate: step 1/6. In terms of biological role, catalyzes the interconversion of methylthioribose-1-phosphate (MTR-1-P) into methylthioribulose-1-phosphate (MTRu-1-P). This is Methylthioribose-1-phosphate isomerase from Desulforudis audaxviator (strain MP104C).